A 95-amino-acid polypeptide reads, in one-letter code: Integration host factor subunit beta (95 aa).

Positions 56 to 76 are disordered; that stretch reads RAPRTGRNPKTGTSVELDGKY.

The protein belongs to the bacterial histone-like protein family. Heterodimer of an alpha and a beta chain.

Its function is as follows. This protein is one of the two subunits of integration host factor, a specific DNA-binding protein that functions in genetic recombination as well as in transcriptional and translational control. The polypeptide is Integration host factor subunit beta (Shewanella woodyi (strain ATCC 51908 / MS32)).